The sequence spans 591 residues: MKKISLPKIGIRPVIDGRRMGVRESLEEQTMNMAKATAALLTEKLRHACGAAVECVISDTCIAGMAEAAACEEKFSSQNVGLTITVTPCWCYGSETIDMDPTRPKAIWGFNGTERPGAVYLAAALAAHSQKGIPAFSIYGHDVQDADDTSIPADVEEKLLRFARAGLAVASMKGKSYLSLGGVSMGIAGSIVDHNFFESWLGMKVQAVDMTELRRRIDQKIYDEAELEMALAWADKNFRYGEDENNKQYQRNAEQSRAVLRESLLMAMCIRDMMQGNSKLADIGRVEESLGYNAIAAGFQGQRHWTDQYPNGDTAEALLNSSFDWNGVREPFVVATENDSLNGVAMLMGHQLTGTAQVFADVRTYWSPEAIERVTGHKLDGLAEHGIIHLINSGSAALDGSCKQRDSEGNPTMKPHWEISQQEADACLAATEWCPAIHEYFRGGGYSSRFLTEGGVPFTMTRVNIIKGLGPVLQIAEGWSVELPKDVHDILNKRTNSTWPTTWFAPRLTGKGPFTDVYSVMANWGANHGVLTIGHVGADFITLASMLRIPVCMHNVEETKVYRPSAWAAHGMDIEGQDYRACQNYGPLYKR.

Active-site proton acceptor residues include glutamate 337 and aspartate 361. Residues glutamate 337, aspartate 361, and histidine 528 each coordinate Mn(2+).

It belongs to the L-fucose isomerase family. As to quaternary structure, homohexamer. It depends on Mn(2+) as a cofactor.

Its subcellular location is the cytoplasm. The catalysed reaction is L-fucose = L-fuculose. Its pathway is carbohydrate degradation; L-fucose degradation; L-lactaldehyde and glycerone phosphate from L-fucose: step 1/3. Functionally, converts the aldose L-fucose into the corresponding ketose L-fuculose. In Escherichia coli (strain SMS-3-5 / SECEC), this protein is L-fucose isomerase.